We begin with the raw amino-acid sequence, 249 residues long: Eukaryotic translation initiation factor 6 (249 aa).

Belongs to the eIF-6 family. In terms of assembly, monomer. Associates with the 60S ribosomal subunit.

Its subcellular location is the cytoplasm. It localises to the nucleus. The protein localises to the nucleolus. Binds to the 60S ribosomal subunit and prevents its association with the 40S ribosomal subunit to form the 80S initiation complex in the cytoplasm. May also be involved in ribosome biogenesis. In Babesia bovis, this protein is Eukaryotic translation initiation factor 6.